A 489-amino-acid polypeptide reads, in one-letter code: Tyrosine-protein phosphatase MSG5 (489 aa).

Basic and acidic residues predominate over residues 1–18; the sequence is MQFHSDKQHLDSKTDIDF. Positions 1–30 are disordered; the sequence is MQFHSDKQHLDSKTDIDFKPNSPRSLQNRN. Residues Ser-22, Ser-98, and Ser-151 each carry the phosphoserine modification. Thr-178 carries the phosphothreonine modification. One can recognise a Tyrosine-protein phosphatase domain in the interval 233-375; it reads GPLLVLPPNL…LMEWGTMLSK (143 aa). The active-site Phosphocysteine intermediate is Cys-319. Disordered stretches follow at residues 375 to 401 and 419 to 489; these read KNSP…VSST and LSSS…MFLP. Residues 419–450 are compositionally biased toward low complexity; sequence LSSSPNDSSVNSSEVTPRTPATLTGARTALAT. Basic and acidic residues predominate over residues 451 to 460; sequence ERGEDDEHCK.

This sequence belongs to the protein-tyrosine phosphatase family. Non-receptor class dual specificity subfamily.

It catalyses the reaction O-phospho-L-tyrosyl-[protein] + H2O = L-tyrosyl-[protein] + phosphate. Dual specificity phosphatase that dephosphorylates MAP kinase FUS3 on both a Tyr and a Ser or Thr. Has a role in adaptation to pheromone. The polypeptide is Tyrosine-protein phosphatase MSG5 (MSG5) (Saccharomyces cerevisiae (strain ATCC 204508 / S288c) (Baker's yeast)).